A 351-amino-acid chain; its full sequence is MKPRVRSEFVKSGYVFAKSPADIAKEYGFTEVAMLGSNENPYPPSDKVLRAAEAELSGVNRYPDPKAAAFHAALRTYICDCPVVTSGLGMDGVIETVIRTIVEPGDKVVISTPTFSMYGLAAKAASARVVNVSRSADFSVDLDTFLNEAKDARLSFLCTPNNPTGTVTPVEDIEYILDRIEGVLFLDCAYVEFSDINYLPLLSRDNLIIGRTMSKVYGLAGLRIGYAFVPEWLEAPYNIAATPFTMNRLSEAAASVAVSDAAYRESFIAHVQKWRDVFMQEIPFPVYPSGSNFILINVAPQKGDAAAESLAKHGVLVRSCTSFPGLGDTFIRVSVGADWENERFLAAVKKL.

Residue K215 is modified to N6-(pyridoxal phosphate)lysine.

The protein belongs to the class-II pyridoxal-phosphate-dependent aminotransferase family. Histidinol-phosphate aminotransferase subfamily. The cofactor is pyridoxal 5'-phosphate.

It carries out the reaction L-histidinol phosphate + 2-oxoglutarate = 3-(imidazol-4-yl)-2-oxopropyl phosphate + L-glutamate. The protein operates within amino-acid biosynthesis; L-histidine biosynthesis; L-histidine from 5-phospho-alpha-D-ribose 1-diphosphate: step 7/9. The chain is Histidinol-phosphate aminotransferase from Methanocorpusculum labreanum (strain ATCC 43576 / DSM 4855 / Z).